Here is a 291-residue protein sequence, read N- to C-terminus: Homoserine kinase (291 aa).

80 to 90 serves as a coordination point for ATP; the sequence is RPASGLGSSAA.

Belongs to the GHMP kinase family. Homoserine kinase subfamily.

It is found in the cytoplasm. It catalyses the reaction L-homoserine + ATP = O-phospho-L-homoserine + ADP + H(+). It participates in amino-acid biosynthesis; L-threonine biosynthesis; L-threonine from L-aspartate: step 4/5. Functionally, catalyzes the ATP-dependent phosphorylation of L-homoserine to L-homoserine phosphate. The chain is Homoserine kinase from Natronomonas pharaonis (strain ATCC 35678 / DSM 2160 / CIP 103997 / JCM 8858 / NBRC 14720 / NCIMB 2260 / Gabara) (Halobacterium pharaonis).